We begin with the raw amino-acid sequence, 206 residues long: Ribosomal RNA small subunit methyltransferase G (206 aa).

S-adenosyl-L-methionine is bound by residues Gly-71, Phe-76, Ala-122–Glu-123, and Arg-135.

The protein belongs to the methyltransferase superfamily. RNA methyltransferase RsmG family.

It is found in the cytoplasm. Its function is as follows. Specifically methylates the N7 position of a guanine in 16S rRNA. In Bacteroides thetaiotaomicron (strain ATCC 29148 / DSM 2079 / JCM 5827 / CCUG 10774 / NCTC 10582 / VPI-5482 / E50), this protein is Ribosomal RNA small subunit methyltransferase G.